Here is a 540-residue protein sequence, read N- to C-terminus: Glucose-6-phosphate isomerase (540 aa).

Glu-346 serves as the catalytic Proton donor. Catalysis depends on residues His-377 and Lys-505.

The protein belongs to the GPI family.

It is found in the cytoplasm. It catalyses the reaction alpha-D-glucose 6-phosphate = beta-D-fructose 6-phosphate. Its pathway is carbohydrate biosynthesis; gluconeogenesis. It functions in the pathway carbohydrate degradation; glycolysis; D-glyceraldehyde 3-phosphate and glycerone phosphate from D-glucose: step 2/4. Functionally, catalyzes the reversible isomerization of glucose-6-phosphate to fructose-6-phosphate. The polypeptide is Glucose-6-phosphate isomerase (Francisella tularensis subsp. tularensis (strain WY96-3418)).